Reading from the N-terminus, the 445-residue chain is Phosphoglucosamine mutase (445 aa).

S101 functions as the Phosphoserine intermediate in the catalytic mechanism. The Mg(2+) site is built by S101, D240, D242, and D244. The residue at position 101 (S101) is a Phosphoserine.

The protein belongs to the phosphohexose mutase family. It depends on Mg(2+) as a cofactor. Post-translationally, activated by phosphorylation.

It carries out the reaction alpha-D-glucosamine 1-phosphate = D-glucosamine 6-phosphate. Functionally, catalyzes the conversion of glucosamine-6-phosphate to glucosamine-1-phosphate. The chain is Phosphoglucosamine mutase from Pseudomonas fluorescens (strain Pf0-1).